Reading from the N-terminus, the 689-residue chain is Methionine--tRNA ligase (689 aa).

The short motif at 15-25 (PYANGPIHLGH) is the 'HIGH' region element. Zn(2+)-binding residues include Cys146, Cys149, Cys159, and Cys162. The 'KMSKS' region signature appears at 332 to 336 (KMSKS). ATP is bound at residue Lys335. The interval 554-574 (DAPKTAAPEKTAEASSVSSEP) is disordered. The tRNA-binding domain occupies 588-689 (DFAKIDLRIA…EGAQPGMRVK (102 aa)).

This sequence belongs to the class-I aminoacyl-tRNA synthetase family. MetG type 1 subfamily. As to quaternary structure, homodimer. Requires Zn(2+) as cofactor.

The protein resides in the cytoplasm. The enzyme catalyses tRNA(Met) + L-methionine + ATP = L-methionyl-tRNA(Met) + AMP + diphosphate. In terms of biological role, is required not only for elongation of protein synthesis but also for the initiation of all mRNA translation through initiator tRNA(fMet) aminoacylation. The polypeptide is Methionine--tRNA ligase (Shewanella baltica (strain OS185)).